A 396-amino-acid polypeptide reads, in one-letter code: Immunoglobulin heavy constant gamma 4 (396 aa).

A CH1 region spans residues 1–98; that stretch reads ASTKGPSVFP…PSNTKVDKRV (98 aa). Over 1–347 the chain is Extracellular; that stretch reads ASTKGPSVFP…DGELDGLWTT (347 aa). Ig-like domains are found at residues 6–99, 118–217, and 226–322; these read PSVF…KRVE, PSVF…KTIS, and PQVY…KSLS. A disulfide bridge links Cys27 with Cys83. Positions 99–110 are hinge; the sequence is ESKYGPPCPSCP. The interval 111–220 is CH2; the sequence is APEFLGGPSV…SIEKTISKAK (110 aa). Disulfide bonds link Cys141–Cys201 and Cys247–Cys305. N-linked (GlcNAc...) (complex) asparagine glycosylation is present at Asn177. Residues 221–327 form a CH3 region; it reads GQPREPQVYT…QKSLSLSLEL (107 aa). The chain crosses the membrane as a helical span at residues 348–368; sequence ITIFITLFLLSVCYSATVTFF. Over 369-396 the chain is Cytoplasmic; it reads KVKWIFSSVVDLKQTIVPDYRNMIRQGA.

Immunoglobulins are composed of two identical heavy chains and two identical light chains; disulfide-linked. Glycosylation on Asn-177 is required for interaction with Fc receptors and ability to activate the complement pathway. In terms of processing, (Microbial infection) Deglycosylation on Asn-177 by S.pyogenes EndoS or Endos2 endoglucosidases prevents interaction between immunoglobulin-gamma (IgG) and Fc receptors, impairing ability to activate the complement pathway.

It localises to the secreted. The protein localises to the cell membrane. In terms of biological role, constant region of immunoglobulin heavy chains. Immunoglobulins, also known as antibodies, are membrane-bound or secreted glycoproteins produced by B lymphocytes. In the recognition phase of humoral immunity, the membrane-bound immunoglobulins serve as receptors which, upon binding of a specific antigen, trigger the clonal expansion and differentiation of B lymphocytes into immunoglobulins-secreting plasma cells. Secreted immunoglobulins mediate the effector phase of humoral immunity, which results in the elimination of bound antigens. The antigen binding site is formed by the variable domain of one heavy chain, together with that of its associated light chain. Thus, each immunoglobulin has two antigen binding sites with remarkable affinity for a particular antigen. The variable domains are assembled by a process called V-(D)-J rearrangement and can then be subjected to somatic hypermutations which, after exposure to antigen and selection, allow affinity maturation for a particular antigen. The sequence is that of Immunoglobulin heavy constant gamma 4 from Homo sapiens (Human).